Here is a 127-residue protein sequence, read N- to C-terminus: Ribosome-binding factor A (127 aa).

Belongs to the RbfA family. In terms of assembly, monomer. Binds 30S ribosomal subunits, but not 50S ribosomal subunits or 70S ribosomes.

The protein resides in the cytoplasm. One of several proteins that assist in the late maturation steps of the functional core of the 30S ribosomal subunit. Associates with free 30S ribosomal subunits (but not with 30S subunits that are part of 70S ribosomes or polysomes). Required for efficient processing of 16S rRNA. May interact with the 5'-terminal helix region of 16S rRNA. The polypeptide is Ribosome-binding factor A (Nitrosococcus oceani (strain ATCC 19707 / BCRC 17464 / JCM 30415 / NCIMB 11848 / C-107)).